A 255-amino-acid chain; its full sequence is 4-hydroxy-tetrahydrodipicolinate reductase (255 aa).

NAD(+)-binding positions include 9-14, aspartate 35, 89-91, and 115-118; these read GFKGKM, GTT, and APNF. Histidine 145 serves as the catalytic Proton donor/acceptor. Histidine 146 is a binding site for (S)-2,3,4,5-tetrahydrodipicolinate. The active-site Proton donor is the lysine 149. Position 155-156 (155-156) interacts with (S)-2,3,4,5-tetrahydrodipicolinate; sequence GT.

It belongs to the DapB family.

Its subcellular location is the cytoplasm. It carries out the reaction (S)-2,3,4,5-tetrahydrodipicolinate + NAD(+) + H2O = (2S,4S)-4-hydroxy-2,3,4,5-tetrahydrodipicolinate + NADH + H(+). The enzyme catalyses (S)-2,3,4,5-tetrahydrodipicolinate + NADP(+) + H2O = (2S,4S)-4-hydroxy-2,3,4,5-tetrahydrodipicolinate + NADPH + H(+). It functions in the pathway amino-acid biosynthesis; L-lysine biosynthesis via DAP pathway; (S)-tetrahydrodipicolinate from L-aspartate: step 4/4. In terms of biological role, catalyzes the conversion of 4-hydroxy-tetrahydrodipicolinate (HTPA) to tetrahydrodipicolinate. This chain is 4-hydroxy-tetrahydrodipicolinate reductase, found in Streptococcus pneumoniae (strain P1031).